The chain runs to 309 residues: L-2-keto-3-deoxyarabonate dehydratase (309 aa).

Lys171 serves as the catalytic Schiff-base intermediate with substrate.

This sequence belongs to the DapA family. In terms of assembly, homodimer.

The enzyme catalyses 2-dehydro-3-deoxy-L-arabinonate = 2,5-dioxopentanoate + H2O. Its function is as follows. Catalyzes the dehydration of L-2-keto-3-deoxyarabonate (L-KDA) to alpha-ketoglutaric semialdehyde (alphaKGSA). Is involved in a degradation pathway of L-arabinose that allows A.brasilense to grow on L-arabinose as a sole carbon source. In Azospirillum brasilense, this protein is L-2-keto-3-deoxyarabonate dehydratase (araD).